The primary structure comprises 205 residues: Recombination protein RecR (205 aa).

Residues 64-79 (CSRCYFITQNDLCAIC) form a C4-type zinc finger. Residues 87 to 182 (RIVCVVEEPL…RVTRLARGLP (96 aa)) form the Toprim domain.

Belongs to the RecR family.

Functionally, may play a role in DNA repair. It seems to be involved in an RecBC-independent recombinational process of DNA repair. It may act with RecF and RecO. The polypeptide is Recombination protein RecR (Roseiflexus castenholzii (strain DSM 13941 / HLO8)).